A 360-amino-acid chain; its full sequence is DnaJ homolog subfamily C member 25 (360 aa).

A helical transmembrane segment spans residues 20–40 (WMLLAPLLPALLLVRPAGALV). One can recognise a J domain in the interval 49-124 (DCYEVLGVSR…ETRKDYDYML (76 aa)). 2 consecutive transmembrane segments (helical) span residues 150–170 (VVIL…WWNS) and 244–264 (LLLF…VWYC).

It belongs to the DNAJC25 family.

The protein resides in the membrane. The polypeptide is DnaJ homolog subfamily C member 25 (DNAJC25) (Homo sapiens (Human)).